The primary structure comprises 101 residues: NAD(P)H-quinone oxidoreductase subunit 4L, chloroplastic (101 aa).

3 helical membrane passes run 2–22 (MLEYVLFLSAYLFSIGIYGLI), 32–52 (MCLELILNAVNINLVTFSDLF), and 61–81 (IFSIFVIAIAAAEAAIGPAIV).

This sequence belongs to the complex I subunit 4L family. In terms of assembly, NDH is composed of at least 16 different subunits, 5 of which are encoded in the nucleus.

Its subcellular location is the plastid. The protein localises to the chloroplast thylakoid membrane. It carries out the reaction a plastoquinone + NADH + (n+1) H(+)(in) = a plastoquinol + NAD(+) + n H(+)(out). The enzyme catalyses a plastoquinone + NADPH + (n+1) H(+)(in) = a plastoquinol + NADP(+) + n H(+)(out). In terms of biological role, NDH shuttles electrons from NAD(P)H:plastoquinone, via FMN and iron-sulfur (Fe-S) centers, to quinones in the photosynthetic chain and possibly in a chloroplast respiratory chain. The immediate electron acceptor for the enzyme in this species is believed to be plastoquinone. Couples the redox reaction to proton translocation, and thus conserves the redox energy in a proton gradient. In Acorus calamus var. americanus (American sweet flag), this protein is NAD(P)H-quinone oxidoreductase subunit 4L, chloroplastic.